The chain runs to 184 residues: MMAMNTETLSLIKQSIKTIPNYPKEGILFRDVTSLLENAAAYKAAIDLLVEHYRGQGFTKIVGTEARGFLFGAPLALELGIGFVPVRKPGKLPRATISQSYELEYGHDSLEIHTDAISANDKVLVVDDLLATGGTIEATVKLIRQLGGEVKDAAFVISLPDLGGEARLTALGLELVKLCEFEGE.

It belongs to the purine/pyrimidine phosphoribosyltransferase family. As to quaternary structure, homodimer.

It is found in the cytoplasm. The catalysed reaction is AMP + diphosphate = 5-phospho-alpha-D-ribose 1-diphosphate + adenine. It functions in the pathway purine metabolism; AMP biosynthesis via salvage pathway; AMP from adenine: step 1/1. Its function is as follows. Catalyzes a salvage reaction resulting in the formation of AMP, that is energically less costly than de novo synthesis. The protein is Adenine phosphoribosyltransferase of Shewanella putrefaciens (strain CN-32 / ATCC BAA-453).